The sequence spans 272 residues: Undecaprenyl-diphosphatase (272 aa).

Helical transmembrane passes span 2-22, 50-70, 83-103, 110-130, 148-168, 195-215, 220-240, and 250-270; these read LELI…WLPI, VIQL…LFPF, FSLW…GVPF, LFYN…LFII, LGYK…IPGT, LAIP…GFAF, LIIL…AIKF, and FKAF…YFLA.

This sequence belongs to the UppP family.

Its subcellular location is the cell membrane. The catalysed reaction is di-trans,octa-cis-undecaprenyl diphosphate + H2O = di-trans,octa-cis-undecaprenyl phosphate + phosphate + H(+). Functionally, catalyzes the dephosphorylation of undecaprenyl diphosphate (UPP). Confers resistance to bacitracin. This chain is Undecaprenyl-diphosphatase, found in Acetivibrio thermocellus (strain ATCC 27405 / DSM 1237 / JCM 9322 / NBRC 103400 / NCIMB 10682 / NRRL B-4536 / VPI 7372) (Clostridium thermocellum).